The sequence spans 465 residues: Probable glucan endo-1,3-beta-glucosidase eglC (465 aa).

An N-terminal signal peptide occupies residues 1–19 (MFTKTQILALALSIASAEA). The Proton donor role is filled by glutamate 128. The N-linked (GlcNAc...) asparagine glycan is linked to asparagine 183. The active-site Nucleophile is glutamate 239. A glycan (N-linked (GlcNAc...) asparagine) is linked at asparagine 318. Low complexity-rich tracts occupy residues 320–333 (SSAS…SAQS) and 380–438 (SPSA…ATPA). Disordered stretches follow at residues 320–356 (SSAS…GHGG) and 380–440 (SPSA…PADF). Residue glycine 442 is the site of GPI-anchor amidated glycine attachment. The propeptide at 443–465 (AGSRLSGSIFGAAMLVAALAVAL) is removed in mature form.

Belongs to the glycosyl hydrolase 17 family. Post-translationally, the GPI-anchor is attached to the protein in the endoplasmic reticulum and serves to target the protein to the cell surface. There, the glucosamine-inositol phospholipid moiety is cleaved off and the GPI-modified mannoprotein is covalently attached via its lipidless GPI glycan remnant to the 1,6-beta-glucan of the outer cell wall layer.

It localises to the cell membrane. The protein localises to the secreted. The protein resides in the cell wall. It catalyses the reaction Hydrolysis of (1-&gt;3)-beta-D-glucosidic linkages in (1-&gt;3)-beta-D-glucans.. In terms of biological role, glucanases play a role in cell expansion during growth, in cell-cell fusion during mating, and in spore release during sporulation. This enzyme may be involved in beta-glucan degradation and also function biosynthetically as a transglycosylase. The polypeptide is Probable glucan endo-1,3-beta-glucosidase eglC (eglC) (Emericella nidulans (strain FGSC A4 / ATCC 38163 / CBS 112.46 / NRRL 194 / M139) (Aspergillus nidulans)).